Here is a 304-residue protein sequence, read N- to C-terminus: Non-specific ribonucleoside hydrolase RihC (304 aa).

H233 is a catalytic residue.

Belongs to the IUNH family. RihC subfamily.

In terms of biological role, hydrolyzes both purine and pyrimidine ribonucleosides with a broad-substrate specificity. In Escherichia coli O157:H7, this protein is Non-specific ribonucleoside hydrolase RihC.